A 229-amino-acid polypeptide reads, in one-letter code: UPF0488 protein C8orf33 (229 aa).

A compositionally biased stretch (low complexity) spans 1-16 (MAALGHLAGEAAAAPG). Residues 1–96 (MAALGHLAGE…GEKASEKLAP (96 aa)) form a disordered region. Ala-2 carries the post-translational modification N-acetylalanine. Residue Arg-27 is modified to Omega-N-methylarginine. The segment covering 69–79 (KKQKNKKKTRN) has biased composition (basic residues). Position 82 is a phosphoserine (Ser-82).

It belongs to the UPF0488 family.

The sequence is that of UPF0488 protein C8orf33 (C8orf33) from Homo sapiens (Human).